Consider the following 426-residue polypeptide: Histidine--tRNA ligase (426 aa).

This sequence belongs to the class-II aminoacyl-tRNA synthetase family. Homodimer.

Its subcellular location is the cytoplasm. The catalysed reaction is tRNA(His) + L-histidine + ATP = L-histidyl-tRNA(His) + AMP + diphosphate + H(+). The protein is Histidine--tRNA ligase of Legionella pneumophila (strain Lens).